A 336-amino-acid chain; its full sequence is Fructose-1,6-bisphosphatase class 1 (336 aa).

Residues Glu-90, Asp-112, Leu-114, and Asp-115 each contribute to the Mg(2+) site. Substrate-binding positions include 115 to 118 (DGSS), Asn-211, and Lys-277. A Mg(2+)-binding site is contributed by Glu-283.

The protein belongs to the FBPase class 1 family. As to quaternary structure, homotetramer. The cofactor is Mg(2+).

It is found in the cytoplasm. It carries out the reaction beta-D-fructose 1,6-bisphosphate + H2O = beta-D-fructose 6-phosphate + phosphate. It participates in carbohydrate biosynthesis; gluconeogenesis. In Pseudomonas putida (strain GB-1), this protein is Fructose-1,6-bisphosphatase class 1.